We begin with the raw amino-acid sequence, 471 residues long: MPAASDKPVVTRFAPSPTGYLHIGGGRTALFNWLYARGRKGTFLLRIEDTDRERSTPEATDAILRGLTWLGLDWDGEVVSQFARKDRHAEVAREMLARGAAYKCFSTQEEIEAFREAARAEGRSTLFRSPWRDADPTSHPDAPFVIRMKAPRSGETVIEDEVQGTVRFQNETLDDMVVLRSDGTPTYMLAVVVDDHDMGVTHVIRGDDHLNNAARQTMVYEAMGWEVPVWAHIPLIHGPDGKKLSKRHGALGVEEYQAMGYPAAGMRNYLARLGWSHGDDEFFTSEQAMDWFDLGGIGRSPARLDFKKLESVCGQHIAVMEDAELMREIAAYLAAARKPALTDLQAERLEKGLYALKDRAKTFPELLEKARFALESRPIAADDAAAKALDPVSRGILRELTPMLQAASWSKQDLEAILTAFASEKGMGFGKLAAPLRTALAGRTVTPSVYDMMLVIGRDETIARLEDAAAA.

The 'HIGH' region motif lies at 15–25 (PSPTGYLHIGG). The 'KMSKS' region motif lies at 243 to 247 (KLSKR). An ATP-binding site is contributed by K246.

Belongs to the class-I aminoacyl-tRNA synthetase family. Glutamate--tRNA ligase type 1 subfamily. Monomer.

It localises to the cytoplasm. The catalysed reaction is tRNA(Glu) + L-glutamate + ATP = L-glutamyl-tRNA(Glu) + AMP + diphosphate. Functionally, catalyzes the attachment of glutamate to tRNA(Glu) in a two-step reaction: glutamate is first activated by ATP to form Glu-AMP and then transferred to the acceptor end of tRNA(Glu). The protein is Glutamate--tRNA ligase 1 of Cereibacter sphaeroides (strain ATCC 17029 / ATH 2.4.9) (Rhodobacter sphaeroides).